Here is a 430-residue protein sequence, read N- to C-terminus: Pyrroloquinoline quinone-dependent sugar dehydrogenase (430 aa).

Residues 1–23 (MARLAPHTLLLALFVFLFGSCTA) form the signal peptide. N-linked (GlcNAc...) asparagine glycosylation occurs at asparagine 25. Arginine 57 provides a ligand contact to pyrroloquinoline quinone. 2 N-linked (GlcNAc...) asparagine glycosylation sites follow: asparagine 94 and asparagine 147. Residue histidine 153 participates in pyrroloquinoline quinone binding. The N-linked (GlcNAc...) asparagine glycan is linked to asparagine 184. Arginine 220 contributes to the pyrroloquinoline quinone binding site. Residues serine 240 and aspartate 242 each coordinate Ca(2+). The cysteines at positions 281 and 316 are disulfide-linked. Asparagine 306 is a glycosylation site (N-linked (GlcNAc...) asparagine). Residue histidine 330 coordinates pyrroloquinoline quinone. N-linked (GlcNAc...) asparagine glycosylation occurs at asparagine 341. Histidine 350 contributes to the pyrroloquinoline quinone binding site. A disulfide bridge connects residues cysteine 388 and cysteine 392.

The protein belongs to the sugar dehydrogenase AA12 family. Ca(2+) is required as a cofactor. It depends on pyrroloquinoline quinone as a cofactor.

It is found in the secreted. Pyrroloquinoline quinone (PPQ)-dependent oxidoreductase that catalyzes the oxidation of various sugars such as L-fucose. In Hypocrea jecorina (strain QM6a) (Trichoderma reesei), this protein is Pyrroloquinoline quinone-dependent sugar dehydrogenase.